The primary structure comprises 108 residues: uncharacterized protein (108 aa).

This is an uncharacterized protein from Acanthamoeba polyphaga mimivirus (APMV).